We begin with the raw amino-acid sequence, 423 residues long: Adenylosuccinate synthetase (423 aa).

Residues 12–18 (GDEGKGK) and 40–42 (GHT) contribute to the GTP site. The Proton acceptor role is filled by aspartate 13. The Mg(2+) site is built by aspartate 13 and glycine 40. IMP is bound by residues 13 to 16 (DEGK), 38 to 41 (NAGH), threonine 129, arginine 143, glutamine 221, threonine 236, and arginine 300. Catalysis depends on histidine 41, which acts as the Proton donor. 296–302 (SVTGRKR) provides a ligand contact to substrate. GTP contacts are provided by residues arginine 302, 328-330 (KSD), and 408-410 (SVG).

It belongs to the adenylosuccinate synthetase family. In terms of assembly, homodimer. The cofactor is Mg(2+).

It localises to the cytoplasm. The catalysed reaction is IMP + L-aspartate + GTP = N(6)-(1,2-dicarboxyethyl)-AMP + GDP + phosphate + 2 H(+). It functions in the pathway purine metabolism; AMP biosynthesis via de novo pathway; AMP from IMP: step 1/2. Its function is as follows. Plays an important role in the de novo pathway of purine nucleotide biosynthesis. Catalyzes the first committed step in the biosynthesis of AMP from IMP. The sequence is that of Adenylosuccinate synthetase from Bacteroides fragilis (strain ATCC 25285 / DSM 2151 / CCUG 4856 / JCM 11019 / LMG 10263 / NCTC 9343 / Onslow / VPI 2553 / EN-2).